A 243-amino-acid polypeptide reads, in one-letter code: Vesicle-associated membrane protein-associated protein B (243 aa).

Ala2 carries the post-translational modification N-acetylalanine. Residues 2–218 (AKVEQVLSLE…AALAATGKEE (217 aa)) lie on the Cytoplasmic side of the membrane. One can recognise an MSP domain in the interval 7–124 (VLSLEPQHEL…MDSKLRCVFE (118 aa)). Ser146 is modified (phosphoserine). A Glycyl lysine isopeptide (Lys-Gly) (interchain with G-Cter in SUMO1) cross-link involves residue Lys147. Phosphoserine is present on residues Ser156 and Ser159. Residues 161-196 (LDDTEVKKVMEECRRLQGEVQRLREESRQLKEEDGL) adopt a coiled-coil conformation. A Phosphoserine modification is found at Ser206. The chain crosses the membrane as a helical; Anchor for type IV membrane protein span at residues 219–239 (GLSARLLALVVLFFIVGVIIG).

This sequence belongs to the VAMP-associated protein (VAP) (TC 9.B.17) family. In terms of assembly, homodimer, and heterodimer with VAPA. Interacts with VAMP1 and VAMP2. Interacts (via MSP domain) with ZFYVE27. Interacts with RMDN3. Interacts with KIF5A in a ZFYVE27-dependent manner. Interacts (via MSP domain) with STARD3 (via phospho-FFAT motif). Interacts with STARD3NL (via FFAT motif). Interacts with CERT1. Interacts with PLEKHA3 and SACM1L to form a ternary complex. Interacts with VPS13A (via FFAT motif). Interacts with RB1CC1 (via phosphorylated FFAT motif), MIGA2 (via phosphorylated FFAT motif), RMDN3 (via phosphorylated FFAT motif), OSBPL1A (via FFAT motif), KCNB1 (via phosphorylated FFAT motif) and KCNB2 (via phosphorylated FFAT motif). Interacts (via MSP domain) with WDR44 (via FFAT motif); the interactions connect the endoplasmic reticulum (ER) with the endosomal tubule.

It localises to the endoplasmic reticulum membrane. Functionally, endoplasmic reticulum (ER)-anchored protein that mediates the formation of contact sites between the ER and endosomes via interaction with FFAT motif-containing proteins such as STARD3 or WDR44. Interacts with STARD3 in a FFAT motif phosphorylation dependent manner. Via interaction with WDR44 participates in neosynthesized protein export. Participates in the endoplasmic reticulum unfolded protein response (UPR) by inducing ERN1/IRE1 activity. Involved in cellular calcium homeostasis regulation. The polypeptide is Vesicle-associated membrane protein-associated protein B (Mus musculus (Mouse)).